We begin with the raw amino-acid sequence, 149 residues long: UPF0178 protein Psyc_0274 (149 aa).

Belongs to the UPF0178 family.

The sequence is that of UPF0178 protein Psyc_0274 from Psychrobacter arcticus (strain DSM 17307 / VKM B-2377 / 273-4).